The chain runs to 531 residues: T-complex protein 1 subunit zeta (531 aa).

The residue at position 2 (Ala2) is an N-acetylalanine. Position 5 is an N6-acetyllysine (Lys5). Gly39 contributes to the ADP binding site. Gly39 lines the ATP pocket. Asp90 lines the Mg(2+) pocket. Residues Gly91, Thr92, Thr93, Ser94, Thr158, and Lys159 each contribute to the ADP site. ATP is bound by residues Gly91, Thr92, and Thr93. An N6-acetyllysine modification is found at Lys199. Ser205 carries the post-translational modification Phosphoserine. Residue Lys251 forms a Glycyl lysine isopeptide (Lys-Gly) (interchain with G-Cter in SUMO2) linkage. 4 positions are modified to N6-acetyllysine: Lys287, Lys365, Lys377, and Lys388. Ala411 serves as a coordination point for ADP. The ATP site is built by Ala411, Gly412, Asp496, and Lys501. ADP is bound at residue Asp496.

The protein belongs to the TCP-1 chaperonin family. As to quaternary structure, component of the chaperonin-containing T-complex (TRiC), a hexadecamer composed of two identical back-to-back stacked rings enclosing a protein folding chamber. Each ring is made up of eight different subunits: TCP1/CCT1, CCT2, CCT3, CCT4, CCT5, CCT6A/CCT6, CCT7, CCT8. Interacts with PACRG.

Its subcellular location is the cytoplasm. It carries out the reaction ATP + H2O = ADP + phosphate + H(+). In terms of biological role, component of the chaperonin-containing T-complex (TRiC), a molecular chaperone complex that assists the folding of actin, tubulin and other proteins upon ATP hydrolysis. The TRiC complex mediates the folding of WRAP53/TCAB1, thereby regulating telomere maintenance. The sequence is that of T-complex protein 1 subunit zeta (CCT6A) from Homo sapiens (Human).